A 110-amino-acid polypeptide reads, in one-letter code: Large ribosomal subunit protein uL22 (110 aa).

The protein belongs to the universal ribosomal protein uL22 family. In terms of assembly, part of the 50S ribosomal subunit.

In terms of biological role, this protein binds specifically to 23S rRNA; its binding is stimulated by other ribosomal proteins, e.g. L4, L17, and L20. It is important during the early stages of 50S assembly. It makes multiple contacts with different domains of the 23S rRNA in the assembled 50S subunit and ribosome. Functionally, the globular domain of the protein is located near the polypeptide exit tunnel on the outside of the subunit, while an extended beta-hairpin is found that lines the wall of the exit tunnel in the center of the 70S ribosome. The sequence is that of Large ribosomal subunit protein uL22 from Photobacterium profundum (strain SS9).